The following is a 680-amino-acid chain: WD repeat-containing protein 48 homolog (680 aa).

WD repeat units lie at residues 26 to 65 (QHRNGVNALQLDANNGKLYSAGRDAIIRVWNTRTDSSEKY), 71 to 110 (HHNDWVNDIVLCCNGRNLISASCDTTVKVWNAQKGFCMST), 113 to 152 (THRDYVQALAYAKDREQVASAGLDKAIFLWDVNTLTALTA), 164 to 203 (GSKDSIYSLAMNPSGTVIVSGSTENILRIWDPRTCMRSMK), 206 to 245 (GHTENVRCLVVSPDGNQVVSGSSDGTIKVWNLGQQRCVQT), 248 to 287 (VHKEGVWSLLMSENFQYIVSGSRDRNIIVTEMRNPSNKTL), 290 to 329 (EEQAPVLSLGYNIDKTGVWATTWNSDIRCWKLPMYDRCTM), and 350 to 389 (KGGAAIKECAVLNDKRYIITKDSQDQVVVYDVLRVVKKEQ). The disordered stretch occupies residues 592–616 (ETTPSGGNANNSLQNSQSDANSEGS).

Belongs to the WD repeat WDR48 family. In terms of assembly, catalytic component of the Usp12-46 deubiquitylase complex consisting of Usp12-46, Wdr20 and Uaf1; regulatory subunit that, together wtih Wdr20, stabilizes Usp12-46. The Usp12-46 deubiquitylase complex associates with arr/arrow; the interaction leads to deubiquitination and stabilization of arr/arrow.

Regulatory component of the Usp12-46 deubiquitylase complex. activates deubiquitination by increasing the catalytic turnover without increasing the affinity of deubiquitinating enzymes for the substrate. The complex deubiquitylates the wg/wingless-signaling receptor arr/arrow, which stabilizes the receptor and increases its concentration at the cell surface; this enhances the sensitivity of cells to wg/wingless-signal stimulation. This increases the amplitude and spatial range of the signaling response to the wg/wingless morphogen gradient, facilitating the precise concentration-dependent regulation of its target genes. Together with Wdr20 and Usp12-46 required for wg/wingless-mediated signaling in the wing imaginal disc and for wg/wingless-dependent regulation of intestinal stem cell proliferation. The chain is WD repeat-containing protein 48 homolog from Drosophila yakuba (Fruit fly).